A 127-amino-acid chain; its full sequence is Protein ApaG (127 aa).

An ApaG domain is found at 3 to 127 (NERKYSIKVE…FILSVPRVLH (125 aa)).

The polypeptide is Protein ApaG (Nitrosomonas europaea (strain ATCC 19718 / CIP 103999 / KCTC 2705 / NBRC 14298)).